A 226-amino-acid chain; its full sequence is Cytidylate kinase (226 aa).

10 to 18 (GPASSGKST) lines the ATP pocket.

Belongs to the cytidylate kinase family. Type 1 subfamily.

It localises to the cytoplasm. It carries out the reaction CMP + ATP = CDP + ADP. The catalysed reaction is dCMP + ATP = dCDP + ADP. This chain is Cytidylate kinase, found in Streptococcus uberis (strain ATCC BAA-854 / 0140J).